We begin with the raw amino-acid sequence, 454 residues long: NADP-specific glutamate dehydrogenase 1 (454 aa).

Position 2 is an N-acetylserine (S2). The active site involves K110. 174-203 (GVLTGKGLNWGGSLIRPEATGYGLVYYTQA) serves as a coordination point for NAD(+). Residues K325, K371, and K433 each participate in a glycyl lysine isopeptide (Lys-Gly) (interchain with G-Cter in ubiquitin) cross-link.

The protein belongs to the Glu/Leu/Phe/Val dehydrogenases family. As to quaternary structure, homohexamer.

The enzyme catalyses L-glutamate + NADP(+) + H2O = 2-oxoglutarate + NH4(+) + NADPH + H(+). Catalyzes the incorporation of an ammonium ion into alpha-ketoglutarate to form L-glutamate, the major route of assimilation of ammonia into an organic form in yeast. In Saccharomyces cerevisiae (strain ATCC 204508 / S288c) (Baker's yeast), this protein is NADP-specific glutamate dehydrogenase 1.